The sequence spans 441 residues: Histidine--tRNA ligase (441 aa).

It belongs to the class-II aminoacyl-tRNA synthetase family. Homodimer.

Its subcellular location is the cytoplasm. The catalysed reaction is tRNA(His) + L-histidine + ATP = L-histidyl-tRNA(His) + AMP + diphosphate + H(+). This chain is Histidine--tRNA ligase, found in Synechococcus sp. (strain WH7803).